The sequence spans 120 residues: Small ribosomal subunit protein uS12c (120 aa).

This sequence belongs to the universal ribosomal protein uS12 family. Part of the 30S ribosomal subunit.

It localises to the plastid. The protein resides in the apicoplast. Functionally, with S4 and S5 plays an important role in translational accuracy. Located at the interface of the 30S and 50S subunits. The chain is Small ribosomal subunit protein uS12c (rps12) from Eimeria tenella (Coccidian parasite).